The chain runs to 252 residues: Ribonuclease HII (252 aa).

Residues 68–252 (EYVAGLDEVG…FGPVRDRLRS (185 aa)) form the RNase H type-2 domain. A divalent metal cation-binding residues include Asp74, Glu75, and Asp165.

This sequence belongs to the RNase HII family. Requires Mn(2+) as cofactor. Mg(2+) is required as a cofactor.

The protein localises to the cytoplasm. The enzyme catalyses Endonucleolytic cleavage to 5'-phosphomonoester.. Its function is as follows. Endonuclease that specifically degrades the RNA of RNA-DNA hybrids. This chain is Ribonuclease HII, found in Lacticaseibacillus paracasei (strain ATCC 334 / BCRC 17002 / CCUG 31169 / CIP 107868 / KCTC 3260 / NRRL B-441) (Lactobacillus paracasei).